A 201-amino-acid polypeptide reads, in one-letter code: Transgelin (201 aa).

Alanine 2 is modified (N-acetylalanine). One can recognise a Calponin-homology (CH) domain in the interval 24-137 (EELEERLVEW…RTLMALGSLA (114 aa)). Serine 166 is modified (phosphoserine). The residue at position 172 (lysine 172) is an N6-acetyllysine. The stretch at 175-200 (IGLQMGSNRGASQAGMTGYGRPRQII) is one Calponin-like repeat. Position 181 is a phosphoserine (serine 181). Arginine 183 is modified (omega-N-methylarginine).

This sequence belongs to the calponin family.

The protein resides in the cytoplasm. Its function is as follows. Actin cross-linking/gelling protein. The sequence is that of Transgelin (Tagln) from Mus musculus (Mouse).